The chain runs to 424 residues: GTPase Obg (424 aa).

Positions 1–158 constitute an Obg domain; the sequence is MFIDTAKIFV…RWIKLELKLL (158 aa). The OBG-type G domain occupies 159 to 331; the sequence is ADVGLIGFPN…LMKEAARLLS (173 aa). Residues 165–172, 190–194, 212–215, 282–285, and 312–314 contribute to the GTP site; these read GFPNVGKS, FTTLK, DIPG, NKSD, and SAA. Mg(2+) contacts are provided by Ser172 and Thr192. The region spanning 345–424 is the OCT domain; sequence RFIEEEKRFT…LNDFEFDFLL (80 aa).

Belongs to the TRAFAC class OBG-HflX-like GTPase superfamily. OBG GTPase family. As to quaternary structure, monomer. Mg(2+) serves as cofactor.

It localises to the cytoplasm. In terms of biological role, an essential GTPase which binds GTP, GDP and possibly (p)ppGpp with moderate affinity, with high nucleotide exchange rates and a fairly low GTP hydrolysis rate. Plays a role in control of the cell cycle, stress response, ribosome biogenesis and in those bacteria that undergo differentiation, in morphogenesis control. The sequence is that of GTPase Obg from Clostridium botulinum (strain Langeland / NCTC 10281 / Type F).